The following is a 379-amino-acid chain: Sulfate adenylyltransferase (379 aa).

The protein belongs to the sulfate adenylyltransferase family.

The catalysed reaction is sulfate + ATP + H(+) = adenosine 5'-phosphosulfate + diphosphate. It functions in the pathway sulfur metabolism; hydrogen sulfide biosynthesis; sulfite from sulfate: step 1/3. The polypeptide is Sulfate adenylyltransferase (Thermococcus onnurineus (strain NA1)).